A 264-amino-acid chain; its full sequence is Virulence plasmid ParA family protein pGP5-D (264 aa).

9-16 (FKGGTGKT) contributes to the ATP binding site.

Belongs to the ParA family.

Functionally, required for growth within mammalian cells. This chain is Virulence plasmid ParA family protein pGP5-D, found in Chlamydia trachomatis.